A 311-amino-acid polypeptide reads, in one-letter code: Salutaridine reductase (311 aa).

17–40 (VTGGNKGIGFEICKQLSSSGIMVV) contributes to the NADP(+) binding site. Position 180 (Ser180) interacts with substrate. Tyr236 serves as the catalytic Proton acceptor.

It belongs to the short-chain dehydrogenases/reductases (SDR) family.

It carries out the reaction (7S)-salutaridinol + NADP(+) = salutaridine + NADPH + H(+). Its activity is regulated as follows. Subject to substrate inhibition at salutaridine concentrations higher than 20 to 30 uM. In terms of biological role, involved in biosynthesis of morphinan-type benzylisoquinoline alkaloids. Catalyzes the stereospecific conversion of salutaridine to salutaridinol. The protein is Salutaridine reductase of Papaver bracteatum (Great scarlet poppy).